The following is a 72-amino-acid chain: MAKEDSIEMQGTILETLPNTMFRVELENGHVVIAHISGKMRKNYIRILTGDKVTVALTPYDLSKGRIVFRSR.

Residues 1-72 (MAKEDSIEMQ…SKGRIVFRSR (72 aa)) form the S1-like domain.

This sequence belongs to the IF-1 family. As to quaternary structure, component of the 30S ribosomal translation pre-initiation complex which assembles on the 30S ribosome in the order IF-2 and IF-3, IF-1 and N-formylmethionyl-tRNA(fMet); mRNA recruitment can occur at any time during PIC assembly.

The protein localises to the cytoplasm. Functionally, one of the essential components for the initiation of protein synthesis. Stabilizes the binding of IF-2 and IF-3 on the 30S subunit to which N-formylmethionyl-tRNA(fMet) subsequently binds. Helps modulate mRNA selection, yielding the 30S pre-initiation complex (PIC). Upon addition of the 50S ribosomal subunit IF-1, IF-2 and IF-3 are released leaving the mature 70S translation initiation complex. This Aeromonas hydrophila subsp. hydrophila (strain ATCC 7966 / DSM 30187 / BCRC 13018 / CCUG 14551 / JCM 1027 / KCTC 2358 / NCIMB 9240 / NCTC 8049) protein is Translation initiation factor IF-1.